The following is an 892-amino-acid chain: MPILLFLIDTSASMNQRTYLGTTYLDIAKGAVEIFMKLRARDPASRGDRYMLVTFDDPPYGVKAGWKENHATFMSELKNLQASGLTTLGHALRAAFDLLNLNRLVSGIDNYGQGRNPFFLEPSVIITITDGNKLTHSSGVAEELHLPLNSPLPGSELTKEPFRWDQRLFALVLRLPGVAVPDSEQLGSVPTDESAITQMCEVTGGRSYCVRTQRMLNQCLESLVQKVLSGVVIHFEKTGPDPPVIGEDGLVDPARPLTSFSPQPWHSCHKLIYVRPNPKTGVPVGHWPISESFWPDQNSPTLPPRSAHPVVRFSCVDCEPMVIDKLPFDKYELEPSPLTQYILERKSPHMCWQVFVNCSGKHSDVAHPFGYLKASTTLTCVNLFVMPYNYPVLLPLLDDLFKVHKLKPNLKWRQSFEMYLKSMPPYYLLPLKKALRMMGAPNLISDNMDCGLSYSVISYLKKLSQQAKIESDRLIVSVGKKPPPETGIKVKNHSNALSLAHRRDFKQLLQGITGEVPLRLIDMNFKEFAGFQIALLNKDLKPQAYRNAYDIPRRNLLDQVTRMRSNLLRTTQKLIRGQDDDSLHSIPVGQMGNYQEYLKMMPSPLREIDPDQPKRLHTFGNPFKQDKKGMMIDEADEFVTGPQNKKRGNTGDLNSGTALKRRRSMSPLLRRPQTPPIITNHVLGKGPTGTQGQQGIIKPIPLHKGAEGNNVGGTESNGERVAGTDAGDCWPGEVDGESGEPAPVEDREDAAAPDGEEEILALENCLDDRSPDHTQNCEELSPPGQEGEMEVNEGDTPAQGTIVMIPLEGSNAELRTRVIKEVRKPGRNYEAIFRLLEEVKGPVSVQRYFIHHAIKEAARFKKRMLIQQLETALEEIEDRQMLPAQINNIHSR.

Residues 3 to 227 (ILLFLIDTSA…QCLESLVQKV (225 aa)) form the VWFA domain. An Inhibitory loop motif is present at residues 630 to 637 (MMIDEADE). Disordered stretches follow at residues 665 to 692 (MSPLLRRPQTPPIITNHVLGKGPTGTQG), 711 to 754 (VGGT…AAPD), and 771 to 793 (PDHTQNCEELSPPGQEGEMEVNE).

It belongs to the Integrator subunit 6 family. In terms of assembly, component of the Integrator complex, composed of core subunits INTS1, INTS2, INTS3, INTS4, INTS5, INTS6, INTS7, INTS8, INTS9/RC74, INTS10, INTS11/CPSF3L, INTS12, INTS13, INTS14 and INTS15. The core complex associates with protein phosphatase 2A subunits PPP2CA and PPP2R1A, to form the Integrator-PP2A (INTAC) complex.

The protein localises to the nucleus. It is found in the chromosome. Its function is as follows. Component of the integrator complex, a multiprotein complex that terminates RNA polymerase II (Pol II) transcription in the promoter-proximal region of genes. The integrator complex provides a quality checkpoint during transcription elongation by driving premature transcription termination of transcripts that are unfavorably configured for transcriptional elongation: the complex terminates transcription by (1) catalyzing dephosphorylation of the C-terminal domain (CTD) of Pol II subunit POLR2A/RPB1 and SUPT5H/SPT5, (2) degrading the exiting nascent RNA transcript via endonuclease activity and (3) promoting the release of Pol II from bound DNA. The integrator complex is also involved in terminating the synthesis of non-coding Pol II transcripts, such as enhancer RNAs (eRNAs), small nuclear RNAs (snRNAs), telomerase RNAs and long non-coding RNAs (lncRNAs). Within the integrator complex, INTS6 acts as a molecular adapter that promotes assembly of protein phosphatase 2A (PP2A) subunits to the integrator core complex, promoting recruitment of PP2A to transcription pause-release checkpoint. The polypeptide is Integrator complex subunit 6 (ints6l) (Danio rerio (Zebrafish)).